Reading from the N-terminus, the 584-residue chain is Beta-(1--&gt;2)glucan export ATP-binding/permease protein NdvA (584 aa).

The region spanning 21 to 301 (VSLVVAANII…MRQFSTQIFE (281 aa)) is the ABC transmembrane type-1 domain. 6 consecutive transmembrane segments (helical) span residues 29-49 (IILA…IDAI), 57-77 (DILF…VLVA), 136-156 (THLA…SMDV), 158-178 (LTLV…MVMD), 248-268 (IAST…VQSG), and 272-292 (VGDV…LDQM). The region spanning 335 to 569 (VEFRHVSFDF…GGRFAALLHT (235 aa)) is the ABC transporter domain. 368 to 375 (GPTGAGKT) contributes to the ATP binding site.

This sequence belongs to the ABC transporter superfamily. Beta-(1--&gt;2)glucan exporter (TC 3.A.1.108.1) family. As to quaternary structure, homodimer.

It is found in the cell inner membrane. It catalyses the reaction [(1-&gt;2)-beta-D-glucosyl](n)(in) + ATP + H2O = [(1-&gt;2)-beta-D-glucosyl](n)(out) + ADP + phosphate + H(+). Functionally, involved in beta-(1--&gt;2)glucan export. Transmembrane domains (TMD) form a pore in the inner membrane and the ATP-binding domain (NBD) is responsible for energy generation. The chain is Beta-(1--&gt;2)glucan export ATP-binding/permease protein NdvA from Agrobacterium vitis (Rhizobium vitis).